The chain runs to 381 residues: 4-hydroxyphenylpyruvate dioxygenase (381 aa).

2 VOC domains span residues 22-156 and 184-338; these read GMDA…LVDR and AIDH…IFTK. Residues His-187, His-270, and Glu-349 each contribute to the Fe cation site.

Belongs to the 4HPPD family. As to quaternary structure, homodimer. It depends on Fe cation as a cofactor.

It catalyses the reaction 3-(4-hydroxyphenyl)pyruvate + O2 = homogentisate + CO2. It functions in the pathway amino-acid degradation; L-phenylalanine degradation; acetoacetate and fumarate from L-phenylalanine: step 3/6. This chain is 4-hydroxyphenylpyruvate dioxygenase (hpd), found in Streptomyces avermitilis (strain ATCC 31267 / DSM 46492 / JCM 5070 / NBRC 14893 / NCIMB 12804 / NRRL 8165 / MA-4680).